The primary structure comprises 331 residues: Biotin synthase (331 aa).

Positions 52 to 277 (PDVEVEGIIS…RTMLRFAGGR (226 aa)) constitute a Radical SAM core domain. [4Fe-4S] cluster contacts are provided by Cys-67, Cys-71, and Cys-74. Positions 110, 143, 202, and 272 each coordinate [2Fe-2S] cluster.

The protein belongs to the radical SAM superfamily. Biotin synthase family. In terms of assembly, homodimer. It depends on [4Fe-4S] cluster as a cofactor. Requires [2Fe-2S] cluster as cofactor.

The catalysed reaction is (4R,5S)-dethiobiotin + (sulfur carrier)-SH + 2 reduced [2Fe-2S]-[ferredoxin] + 2 S-adenosyl-L-methionine = (sulfur carrier)-H + biotin + 2 5'-deoxyadenosine + 2 L-methionine + 2 oxidized [2Fe-2S]-[ferredoxin]. It functions in the pathway cofactor biosynthesis; biotin biosynthesis; biotin from 7,8-diaminononanoate: step 2/2. Catalyzes the conversion of dethiobiotin (DTB) to biotin by the insertion of a sulfur atom into dethiobiotin via a radical-based mechanism. In Mycobacterium sp. (strain JLS), this protein is Biotin synthase.